We begin with the raw amino-acid sequence, 1391 residues long: DNA-directed RNA polymerase subunit beta' (1391 aa).

Residues Cys-72, Cys-74, Cys-87, and Cys-90 each contribute to the Zn(2+) site. Residues Asp-462, Asp-464, and Asp-466 each coordinate Mg(2+). Positions 816, 890, 897, and 900 each coordinate Zn(2+).

Belongs to the RNA polymerase beta' chain family. The RNAP catalytic core consists of 2 alpha, 1 beta, 1 beta' and 1 omega subunit. When a sigma factor is associated with the core the holoenzyme is formed, which can initiate transcription. Requires Mg(2+) as cofactor. Zn(2+) is required as a cofactor.

It catalyses the reaction RNA(n) + a ribonucleoside 5'-triphosphate = RNA(n+1) + diphosphate. DNA-dependent RNA polymerase catalyzes the transcription of DNA into RNA using the four ribonucleoside triphosphates as substrates. This chain is DNA-directed RNA polymerase subunit beta', found in Neisseria meningitidis serogroup B (strain ATCC BAA-335 / MC58).